Consider the following 318-residue polypeptide: NADH-ubiquinone oxidoreductase chain 1 (318 aa).

A run of 8 helical transmembrane segments spans residues 2-22 (FLIN…FLTL), 69-89 (FLFT…WAPL), 102-122 (LLFI…SGWA), 146-166 (MTTI…TAFA), 171-191 (HLWL…STLA), 222-242 (LFFM…VILF), 253-273 (EIST…FLWV), and 294-314 (LPLT…LACI).

It belongs to the complex I subunit 1 family.

The protein localises to the mitochondrion inner membrane. The enzyme catalyses a ubiquinone + NADH + 5 H(+)(in) = a ubiquinol + NAD(+) + 4 H(+)(out). In terms of biological role, core subunit of the mitochondrial membrane respiratory chain NADH dehydrogenase (Complex I) that is believed to belong to the minimal assembly required for catalysis. Complex I functions in the transfer of electrons from NADH to the respiratory chain. The immediate electron acceptor for the enzyme is believed to be ubiquinone. The chain is NADH-ubiquinone oxidoreductase chain 1 (MT-ND1) from Mammuthus primigenius (Siberian woolly mammoth).